The sequence spans 1020 residues: C2 and GRAM domain-containing protein At1g03370 (1020 aa).

One can recognise a C2 1 domain in the interval 1–102 (MKLQVRVVEA…ENQSLGTVWY (102 aa)). Residues aspartate 17, aspartate 23, aspartate 69, aspartate 71, and aspartate 77 each coordinate Ca(2+). Polar residues-rich tracts occupy residues 134-144 (TSSGDQTSASR) and 158-172 (TCASPSRSDDASSIP). A disordered region spans residues 134-172 (TSSGDQTSASRSPDLRLESPIDPSTCASPSRSDDASSIP). Residues 249-421 (SGGVVVDQLF…LLAQSVKPVD (173 aa)) form the VASt 1 domain. The chain crosses the membrane as a helical span at residues 454–474 (FTVLSTFLIGIYVFVHIVFAI). The C2 2 domain maps to 517–635 (QARKQKGSDH…NISDLADVWV (119 aa)). Aspartate 551, aspartate 557, aspartate 604, phenylalanine 605, and aspartate 606 together coordinate Ca(2+). In terms of domain architecture, GRAM spans 689–752 (AFQKLFGLPQ…LWEDIEEIQV (64 aa)). Positions 848-1010 (RFSEVFSLTL…MTFGFLEKEY (163 aa)) constitute a VASt 2 domain.

The cofactor is Ca(2+).

It is found in the membrane. This chain is C2 and GRAM domain-containing protein At1g03370, found in Arabidopsis thaliana (Mouse-ear cress).